A 1663-amino-acid chain; its full sequence is TPR repeat-containing protein DDB_G0287407 (1663 aa).

2 disordered regions span residues Arg84–Gln109 and Ser326–Gln359. Over residues Thr89–Thr105 the composition is skewed to low complexity. Over residues Asp333–Phe352 the composition is skewed to acidic residues. TPR repeat units lie at residues Ser1110–Asn1143, Ala1150–Glu1183, Ala1192–Lys1225, Ala1234–Lys1269, Ala1278–Arg1311, and Ser1320–Ile1353. Disordered stretches follow at residues Val1500–Arg1528 and Gln1544–Thr1571. Positions Arg1516–Ser1547 form a coiled coil. Low complexity-rich tracts occupy residues Gln1518–Arg1528 and Gln1544–Gln1563.

This chain is TPR repeat-containing protein DDB_G0287407, found in Dictyostelium discoideum (Social amoeba).